A 365-amino-acid chain; its full sequence is Peptide chain release factor 2 (365 aa).

Gln-249 is subject to N5-methylglutamine.

The protein belongs to the prokaryotic/mitochondrial release factor family. Methylated by PrmC. Methylation increases the termination efficiency of RF2.

The protein localises to the cytoplasm. Peptide chain release factor 2 directs the termination of translation in response to the peptide chain termination codons UGA and UAA. In Acholeplasma laidlawii (strain PG-8A), this protein is Peptide chain release factor 2.